The chain runs to 401 residues: Argininosuccinate synthase (401 aa).

10–18 (AYSGGVDTS) serves as a coordination point for ATP. Tyr-89 is an L-citrulline binding site. Gly-119 serves as a coordination point for ATP. Residues Thr-121, Asn-125, and Asp-126 each contribute to the L-aspartate site. Asn-125 serves as a coordination point for L-citrulline. Residues Arg-129, Ser-177, Ser-186, Glu-262, and Tyr-274 each coordinate L-citrulline.

This sequence belongs to the argininosuccinate synthase family. Type 1 subfamily. Homotetramer.

The protein localises to the cytoplasm. It carries out the reaction L-citrulline + L-aspartate + ATP = 2-(N(omega)-L-arginino)succinate + AMP + diphosphate + H(+). It functions in the pathway amino-acid biosynthesis; L-arginine biosynthesis; L-arginine from L-ornithine and carbamoyl phosphate: step 2/3. The chain is Argininosuccinate synthase from Thermosynechococcus vestitus (strain NIES-2133 / IAM M-273 / BP-1).